An 83-amino-acid polypeptide reads, in one-letter code: Defensin-like protein 194 (83 aa).

The signal sequence occupies residues 1 to 27 (MAMKSVSNFAIFLILFLVTSEISEIEA). Disulfide bonds link C32–C78, C44–C68, C53–C73, and C57–C75.

Belongs to the DEFL family. Protease inhibitor I18 (RTI/MTI-2) subfamily.

It is found in the secreted. The protein is Defensin-like protein 194 (ATTI3) of Arabidopsis thaliana (Mouse-ear cress).